The chain runs to 261 residues: 3-hydroxyacyl-CoA dehydrogenase type-2 (261 aa).

A2 is subject to N-acetylalanine. Positions 20, 22, and 41 each coordinate NAD(+). N6-acetyllysine; alternate is present on K53. K53 carries the post-translational modification N6-succinyllysine; alternate. D64 and V65 together coordinate NAD(+). K69 is subject to N6-acetyllysine. C91 serves as a coordination point for NAD(+). K99 and K105 each carry N6-acetyllysine. Residue S155 coordinates substrate. Residues Y168, K172, F201, and T203 each contribute to the NAD(+) site. Y168 acts as the Proton acceptor in catalysis. Position 212 is an N6-acetyllysine; alternate (K212). The residue at position 212 (K212) is an N6-succinyllysine; alternate.

The protein belongs to the short-chain dehydrogenases/reductases (SDR) family. Homotetramer. Component of mitochondrial ribonuclease P, a complex composed of TRMT10C/MRPP1, HSD17B10/MRPP2 and PRORP/MRPP3. Interacts with TRMT10C/MRPP1; forming the MRPP1-MRPP2 subcomplex of the mitochondrial ribonuclease P complex. Ubiquitously expressed in normal tissues but is overexpressed in neurons affected in AD.

It localises to the mitochondrion. It is found in the mitochondrion matrix. The protein resides in the mitochondrion nucleoid. The catalysed reaction is a (3S)-3-hydroxyacyl-CoA + NAD(+) = a 3-oxoacyl-CoA + NADH + H(+). It carries out the reaction (2S,3S)-3-hydroxy-2-methylbutanoyl-CoA + NAD(+) = 2-methyl-3-oxobutanoyl-CoA + NADH + H(+). The enzyme catalyses testosterone + NAD(+) = androst-4-ene-3,17-dione + NADH + H(+). It catalyses the reaction 5alpha-androstane-3alpha,17beta-diol + NAD(+) = 17beta-hydroxy-5alpha-androstan-3-one + NADH + H(+). The catalysed reaction is 17beta-estradiol + NAD(+) = estrone + NADH + H(+). It carries out the reaction cholate + NAD(+) = 3alpha,12alpha-dihydroxy-7-oxo-5beta-cholanate + NADH + H(+). The enzyme catalyses (3S)-3-hydroxybutanoyl-CoA + NAD(+) = acetoacetyl-CoA + NADH + H(+). It catalyses the reaction (3S)-hydroxyoctanoyl-CoA + NAD(+) = 3-oxooctanoyl-CoA + NADH + H(+). The catalysed reaction is (3S)-hydroxyhexadecanoyl-CoA + NAD(+) = 3-oxohexadecanoyl-CoA + NADH + H(+). It carries out the reaction 17beta-hydroxy-5alpha-androstan-3-one + NAD(+) = 5alpha-androstan-3,17-dione + NADH + H(+). The enzyme catalyses 5alpha-pregnan-20beta-ol-3-one + NAD(+) = 5alpha-pregnane-3,20-dione + NADH + H(+). It catalyses the reaction 3alpha-hydroxy-5alpha-pregnan-20-one + NAD(+) = 5alpha-pregnane-3,20-dione + NADH + H(+). The catalysed reaction is cortisone + NAD(+) = 17alpha-hydroxypregn-4-en-3,11,20-trione-21-al + NADH + H(+). It carries out the reaction 11-dehydrocorticosterone + NAD(+) = pregn-4-ene-3,11,20,21-tetraone + NADH + H(+). The enzyme catalyses cortisol + NAD(+) = 11beta,17alpha-dihydroxypregn-4-ene-3,20,21-trione + NADH + H(+). It catalyses the reaction chenodeoxycholate + NAD(+) = 7-oxolithocholate + NADH + H(+). The catalysed reaction is ursodeoxycholate + NAD(+) = 7-oxolithocholate + NADH + H(+). It carries out the reaction 3beta,7beta-dihydroxy-5beta-cholan-24-oate + NAD(+) = 3beta-hydroxy-7-oxo-5beta-cholan-24-oate + NADH + H(+). It participates in amino-acid degradation; L-isoleucine degradation. It functions in the pathway lipid metabolism; fatty acid beta-oxidation. The protein operates within steroid metabolism. Its pathway is lipid metabolism; bile acid biosynthesis. Its activity is regulated as follows. The phospholipase C-like activity toward cardiolipin is inhibited by amyloid-beta peptide. Mitochondrial dehydrogenase involved in pathways of fatty acid, branched-chain amino acid and steroid metabolism. Acts as (S)-3-hydroxyacyl-CoA dehydrogenase in mitochondrial fatty acid beta-oxidation, a major degradation pathway of fatty acids. Catalyzes the third step in the beta-oxidation cycle, namely the reversible conversion of (S)-3-hydroxyacyl-CoA to 3-ketoacyl-CoA. Preferentially accepts straight medium- and short-chain acyl-CoA substrates with highest efficiency for (3S)-hydroxybutanoyl-CoA. Acts as 3-hydroxy-2-methylbutyryl-CoA dehydrogenase in branched-chain amino acid catabolic pathway. Catalyzes the oxidation of 3-hydroxy-2-methylbutanoyl-CoA into 2-methyl-3-oxobutanoyl-CoA, a step in isoleucine degradation pathway. Has hydroxysteroid dehydrogenase activity toward steroid hormones and bile acids. Catalyzes the oxidation of 3alpha-, 17beta-, 20beta- and 21-hydroxysteroids and 7alpha- and 7beta-hydroxy bile acids. Oxidizes allopregnanolone/brexanolone at the 3alpha-hydroxyl group, which is known to be critical for the activation of gamma-aminobutyric acid receptors (GABAARs) chloride channel. Has phospholipase C-like activity toward cardiolipin and its oxidized species. Likely oxidizes the 2'-hydroxyl in the head group of cardiolipin to form a ketone intermediate that undergoes nucleophilic attack by water and fragments into diacylglycerol, dihydroxyacetone and orthophosphate. Has higher affinity for cardiolipin with oxidized fatty acids and may degrade these species during the oxidative stress response to protect cells from apoptosis. By interacting with intracellular amyloid-beta, it may contribute to the neuronal dysfunction associated with Alzheimer disease (AD). Essential for structural and functional integrity of mitochondria. In terms of biological role, in addition to mitochondrial dehydrogenase activity, moonlights as a component of mitochondrial ribonuclease P, a complex that cleaves tRNA molecules in their 5'-ends. Together with TRMT10C/MRPP1, forms a subcomplex of the mitochondrial ribonuclease P, named MRPP1-MRPP2 subcomplex, which displays functions that are independent of the ribonuclease P activity. The MRPP1-MRPP2 subcomplex catalyzes the formation of N(1)-methylguanine and N(1)-methyladenine at position 9 (m1G9 and m1A9, respectively) in tRNAs; HSD17B10/MRPP2 acting as a non-catalytic subunit. The MRPP1-MRPP2 subcomplex also acts as a tRNA maturation platform: following 5'-end cleavage by the mitochondrial ribonuclease P complex, the MRPP1-MRPP2 subcomplex enhances the efficiency of 3'-processing catalyzed by ELAC2, retains the tRNA product after ELAC2 processing and presents the nascent tRNA to the mitochondrial CCA tRNA nucleotidyltransferase TRNT1 enzyme. Associates with mitochondrial DNA complexes at the nucleoids to initiate RNA processing and ribosome assembly. This Homo sapiens (Human) protein is 3-hydroxyacyl-CoA dehydrogenase type-2 (HSD17B10).